Consider the following 593-residue polypeptide: High affinity cGMP-specific 3',5'-cyclic phosphodiesterase 9A (593 aa).

The segment at 87–142 (SAGVEDKRTTSRGQSAERPLRDRRVVGLEQPRREGAFESGQVEPRPREPQGCCQEG) is disordered. The segment covering 104 to 122 (RPLRDRRVVGLEQPRREGA) has biased composition (basic and acidic residues). The PDEase domain maps to 236-557 (PRRDVPTYPK…DRYEELKRID (322 aa)). The Proton donor role is filled by His312. 312-316 (HNFRH) lines the 3',5'-cyclic GMP pocket. Zn(2+) contacts are provided by His316, His352, and Asp353. Asp353 provides a ligand contact to 3',5'-cyclic GMP. Asp353 contacts Mg(2+). Position 379 is a phosphoserine (Ser379). Residues Asp462, Tyr484, and 512-513 (AQ) each bind 3',5'-cyclic GMP. Asp462 provides a ligand contact to Zn(2+). A disordered region spans residues 564–593 (QKKTDSLTSGATEKSRERSRDVKNSEGDCA). Over residues 576-593 (EKSRERSRDVKNSEGDCA) the composition is skewed to basic and acidic residues.

Belongs to the cyclic nucleotide phosphodiesterase family. PDE9 subfamily. In terms of assembly, homodimer. Requires Zn(2+) as cofactor. It depends on Mg(2+) as a cofactor.

It is found in the cell projection. Its subcellular location is the ruffle membrane. The protein localises to the cytoplasm. The protein resides in the perinuclear region. It localises to the golgi apparatus. It is found in the endoplasmic reticulum. Its subcellular location is the cell membrane. The protein localises to the sarcolemma. It catalyses the reaction 3',5'-cyclic GMP + H2O = GMP + H(+). Its pathway is purine metabolism; 3',5'-cyclic GMP degradation; GMP from 3',5'-cyclic GMP: step 1/1. Specifically inhibited by a compound named 3r ((R)-2-((1-cyclopentyl-4-hydroxy-1H-pyrazolo[3,4-d]pyrimidin-6- yl)amino)-N-(4-methoxyphenyl)propanamide); the inhibitor forms a hydrogen bond with Tyr-484, Ala-512 and Gln-513. Specifically hydrolyzes the second messenger cGMP, which is a key regulator of many important physiological processes. Highly specific: compared to other members of the cyclic nucleotide phosphodiesterase family, has the highest affinity and selectivity for cGMP. Specifically regulates natriuretic-peptide-dependent cGMP signaling in heart, acting as a regulator of cardiac hypertrophy in myocytes and muscle. Does not regulate nitric oxide-dependent cGMP in heart. Additional experiments are required to confirm whether its ability to hydrolyze natriuretic-peptide-dependent cGMP is specific to heart or is a general feature of the protein. In brain, involved in cognitive function, such as learning and long-term memory. The sequence is that of High affinity cGMP-specific 3',5'-cyclic phosphodiesterase 9A (PDE9A) from Pan troglodytes (Chimpanzee).